An 878-amino-acid polypeptide reads, in one-letter code: Protein translocase subunit SecA (878 aa).

Residues Gln-81, 99–103 (GEGKT), and Asp-489 contribute to the ATP site.

Belongs to the SecA family.

Its subcellular location is the plastid. It localises to the chloroplast stroma. It is found in the chloroplast thylakoid membrane. It catalyses the reaction ATP + H2O + cellular proteinSide 1 = ADP + phosphate + cellular proteinSide 2.. In terms of biological role, has a central role in coupling the hydrolysis of ATP to the transfer of proteins across the thylakoid membrane. In Thalassiosira pseudonana (Marine diatom), this protein is Protein translocase subunit SecA.